Here is a 90-residue protein sequence, read N- to C-terminus: Large ribosomal subunit protein eL37 (90 aa).

The Zn(2+) site is built by C19, C22, C34, and C37. The C4-type zinc finger occupies 19–37; it reads CRRCGRQSYHKQKNSCSSC. Positions 21–31 are enriched in basic residues; that stretch reads RCGRQSYHKQK. Residues 21-59 form a disordered region; sequence RCGRQSYHKQKNSCSSCGYPNPKMRNPGSIKARRRRTIG.

It belongs to the eukaryotic ribosomal protein eL37 family. Zn(2+) serves as cofactor.

Binds to the 23S rRNA. The protein is Large ribosomal subunit protein eL37 (RPL37) of Encephalitozoon cuniculi (strain GB-M1) (Microsporidian parasite).